Consider the following 562-residue polypeptide: Protein wntless (562 aa).

At 1 to 13 the chain is on the cytoplasmic side; it reads MSGTILENLSGRK. The helical transmembrane segment at 14–34 threads the bilayer; it reads LSILVTTLLLCQVLCFLLGGL. Topologically, residues 35–239 are lumenal; that stretch reads YAPLPAGHVT…AIHQNGGFTQ (205 aa). Asn-58 carries an N-linked (GlcNAc...) asparagine glycan. The chain crosses the membrane as a helical span at residues 240–260; it reads IWLLLKTVLFPFVVGIMIWFW. Residues 261–270 are Cytoplasmic-facing; it reads RRVHLLQRSP. The helical transmembrane segment at 271-291 threads the bilayer; sequence ALLEYMLIYLGAALTFLNLPL. Topologically, residues 292–311 are lumenal; the sequence is EYLSLVFEMPYMLLLSDIRQ. Residues 312–332 form a helical membrane-spanning segment; the sequence is GIFYAMLLTFWLVFAGEHMLI. Residues 333–344 lie on the Cytoplasmic side of the membrane; that stretch reads QDAPNKSTIRSR. The chain crosses the membrane as a helical span at residues 345 to 365; the sequence is YWKHLSAVVVGCISLFVFDIC. Over 366–390 the chain is Lumenal; sequence ERGVQLRNPFYSIWAMPLAAKMAMT. Residues 391 to 411 traverse the membrane as a helical segment; it reads FIVLAGVSAAIYFLFLCYMIW. Residues 412-441 lie on the Cytoplasmic side of the membrane; it reads KVFRNIGDKRTSLPSMSQARRLHYESLIYR. A helical transmembrane segment spans residues 442–462; sequence FKFLMLATIVCAALTVTGFIM. The Lumenal segment spans residues 463–482; that stretch reads GQRAEGQWDWNDNVAIQPTS. A helical membrane pass occupies residues 483–503; sequence AFLTGVYGMWNIYIFALLILY. The Cytoplasmic portion of the chain corresponds to 504–562; the sequence is APSHKQWPTMHHSDETTQSNENIVASAASEEIEFSHLPSDSNPSEISSLTSFTRKVAFD. The segment at 539 to 562 is disordered; that stretch reads HLPSDSNPSEISSLTSFTRKVAFD. The span at 541-556 shows a compositional bias: polar residues; sequence PSDSNPSEISSLTSFT.

Belongs to the wntless family. In terms of assembly, interacts with wg; in the Golgi. Interacts with Vps35, a component of the retromer complex; wls stability is regulated by Vps35.

Its subcellular location is the presynaptic cell membrane. The protein resides in the postsynaptic cell membrane. It localises to the cell membrane. The protein localises to the endoplasmic reticulum membrane. It is found in the endosome membrane. Its subcellular location is the golgi apparatus membrane. Functionally, a segment polarity gene required for wingless (wg)-dependent patterning processes, acting in both wg-sending cells and wg-target cells. In non-neuronal cells wls directs wg secretion. The wls traffic loop encompasses the Golgi, the cell surface, an endocytic compartment and a retrograde route leading back to the Golgi, and involves clathrin-mediated endocytosis and the retromer complex (a conserved protein complex consisting of Vps35 and Vps26). In neuronal cells (the larval motorneuron NMJ), the wg signal moves across the synapse via the release of wls-containing exosome-like vesicles. Postsynaptic wls is required for the trafficking of fz2 through the fz2-interacting protein Grip. The protein is Protein wntless of Drosophila erecta (Fruit fly).